A 310-amino-acid polypeptide reads, in one-letter code: Olfactory receptor 5P55 (310 aa).

The Extracellular portion of the chain corresponds to 1–25 (METQNHTTVTEFILLGLTESSTLRV). N-linked (GlcNAc...) asparagine glycosylation occurs at asparagine 5. A helical membrane pass occupies residues 26-46 (ILFMVFLGIYTVTLVGNFSII). Topologically, residues 47-54 (SLIRSCPQ) are cytoplasmic. A helical transmembrane segment spans residues 55–75 (LHTPMYLFLSHLAFVDIGFST). The Extracellular segment spans residues 76–99 (SITPTMFKGFLGNRLVLSVAACIA). The cysteines at positions 97 and 189 are disulfide-linked. Residues 100–120 (QFCITVTFGTVECFLLAVMAY) traverse the membrane as a helical segment. Residues 121-133 (DRYVAICSPLLYS) are Cytoplasmic-facing. Residues 134–154 (THMSPRICFLLVGASYVGGCV) traverse the membrane as a helical segment. Residues 155–196 (NSGAFTSCLSILSFCGPNQIDHFFCDFPAVLKLSCSDVSIIG) lie on the Extracellular side of the membrane. The helical transmembrane segment at 197–217 (IIPSISAGSIIVITVFVIAVS) threads the bilayer. Topologically, residues 218-237 (YAYILITILKMRSTEGRQKA) are cytoplasmic. A helical transmembrane segment spans residues 238 to 258 (FSTCTSHLTAVTLYYGTITFI). Residues 259–271 (YVMPKSNYSTAQN) lie on the Extracellular side of the membrane. N-linked (GlcNAc...) asparagine glycosylation occurs at asparagine 265. Residues 272–292 (KILSVFYTVVIPMLNPLIYSL) traverse the membrane as a helical segment. Topologically, residues 293–310 (RNRDVKEALRKAIIRIFP) are cytoplasmic.

Belongs to the G-protein coupled receptor 1 family.

It is found in the cell membrane. Functionally, potential odorant receptor. In Mus musculus (Mouse), this protein is Olfactory receptor 5P55.